Consider the following 456-residue polypeptide: Bifunctional protein GlmU (456 aa).

The pyrophosphorylase stretch occupies residues Met-1–Arg-229. UDP-N-acetyl-alpha-D-glucosamine-binding positions include Leu-7–Gly-10, Lys-21, Gln-73, Gly-78–Thr-79, Tyr-103–Asp-105, Gly-139, Glu-154, Asn-169, and Asn-227. Asp-105 contacts Mg(2+). Mg(2+) is bound at residue Asn-227. Residues Val-230–Ala-250 form a linker region. The interval Gly-251–Ser-456 is N-acetyltransferase. Residues Arg-333 and Lys-351 each coordinate UDP-N-acetyl-alpha-D-glucosamine. Residue His-363 is the Proton acceptor of the active site. UDP-N-acetyl-alpha-D-glucosamine is bound by residues Tyr-366 and Asn-377. Acetyl-CoA contacts are provided by residues Ala-380, Asn-386–Tyr-387, Ser-405, Ala-423, and Arg-440.

It in the N-terminal section; belongs to the N-acetylglucosamine-1-phosphate uridyltransferase family. In the C-terminal section; belongs to the transferase hexapeptide repeat family. In terms of assembly, homotrimer. Requires Mg(2+) as cofactor.

Its subcellular location is the cytoplasm. The catalysed reaction is alpha-D-glucosamine 1-phosphate + acetyl-CoA = N-acetyl-alpha-D-glucosamine 1-phosphate + CoA + H(+). The enzyme catalyses N-acetyl-alpha-D-glucosamine 1-phosphate + UTP + H(+) = UDP-N-acetyl-alpha-D-glucosamine + diphosphate. Its pathway is nucleotide-sugar biosynthesis; UDP-N-acetyl-alpha-D-glucosamine biosynthesis; N-acetyl-alpha-D-glucosamine 1-phosphate from alpha-D-glucosamine 6-phosphate (route II): step 2/2. It participates in nucleotide-sugar biosynthesis; UDP-N-acetyl-alpha-D-glucosamine biosynthesis; UDP-N-acetyl-alpha-D-glucosamine from N-acetyl-alpha-D-glucosamine 1-phosphate: step 1/1. It functions in the pathway bacterial outer membrane biogenesis; LPS lipid A biosynthesis. Functionally, catalyzes the last two sequential reactions in the de novo biosynthetic pathway for UDP-N-acetylglucosamine (UDP-GlcNAc). The C-terminal domain catalyzes the transfer of acetyl group from acetyl coenzyme A to glucosamine-1-phosphate (GlcN-1-P) to produce N-acetylglucosamine-1-phosphate (GlcNAc-1-P), which is converted into UDP-GlcNAc by the transfer of uridine 5-monophosphate (from uridine 5-triphosphate), a reaction catalyzed by the N-terminal domain. In Bordetella petrii (strain ATCC BAA-461 / DSM 12804 / CCUG 43448), this protein is Bifunctional protein GlmU.